The primary structure comprises 269 residues: Tryptophan synthase alpha chain (269 aa).

Residues E49 and D60 each act as proton acceptor in the active site.

It belongs to the TrpA family. As to quaternary structure, tetramer of two alpha and two beta chains.

It carries out the reaction (1S,2R)-1-C-(indol-3-yl)glycerol 3-phosphate + L-serine = D-glyceraldehyde 3-phosphate + L-tryptophan + H2O. Its pathway is amino-acid biosynthesis; L-tryptophan biosynthesis; L-tryptophan from chorismate: step 5/5. Its function is as follows. The alpha subunit is responsible for the aldol cleavage of indoleglycerol phosphate to indole and glyceraldehyde 3-phosphate. In Actinobacillus pleuropneumoniae serotype 7 (strain AP76), this protein is Tryptophan synthase alpha chain.